A 740-amino-acid chain; its full sequence is NAD(P)H-quinone oxidoreductase subunit 5, chloroplastic (740 aa).

16 consecutive transmembrane segments (helical) span residues 9-29 (WIIP…LLLF), 40-60 (WSFL…YLSI), 89-109 (IDPL…LVLI), 125-145 (FAYM…SNLI), 147-167 (IYFF…FWFT), 185-205 (GDFG…SFEF), 221-241 (VNLL…IAKS), 258-278 (TPIS…FLVA), 283-303 (LFIV…ITIL), 327-347 (LGYM…FHLI), 354-374 (ALLF…VGYS), 396-416 (TAFL…CFWS), 425-445 (LLFS…TAFY), 547-567 (ILFP…IGIP), 606-626 (FSVS…KPFY), and 718-738 (ISSY…FLKI).

This sequence belongs to the complex I subunit 5 family. As to quaternary structure, NDH is composed of at least 16 different subunits, 5 of which are encoded in the nucleus.

The protein localises to the plastid. Its subcellular location is the chloroplast thylakoid membrane. The enzyme catalyses a plastoquinone + NADH + (n+1) H(+)(in) = a plastoquinol + NAD(+) + n H(+)(out). The catalysed reaction is a plastoquinone + NADPH + (n+1) H(+)(in) = a plastoquinol + NADP(+) + n H(+)(out). In terms of biological role, NDH shuttles electrons from NAD(P)H:plastoquinone, via FMN and iron-sulfur (Fe-S) centers, to quinones in the photosynthetic chain and possibly in a chloroplast respiratory chain. The immediate electron acceptor for the enzyme in this species is believed to be plastoquinone. Couples the redox reaction to proton translocation, and thus conserves the redox energy in a proton gradient. The chain is NAD(P)H-quinone oxidoreductase subunit 5, chloroplastic (ndhF) from Aethionema cordifolium (Lebanon stonecress).